The sequence spans 229 residues: Transcriptional activator protein YukR (229 aa).

Residues 157–222 (DTSGKGILSP…QAIRLGVELE (66 aa)) form the HTH luxR-type domain. The segment at residues 181–200 (YPEIALIAGITTRTVKHHMG) is a DNA-binding region (H-T-H motif).

It belongs to the autoinducer-regulated transcriptional regulatory protein family.

Probable transcriptional activator. Binds to an autoinducer molecule. This is Transcriptional activator protein YukR (yukR) from Yersinia ruckeri.